Reading from the N-terminus, the 469-residue chain is MFNRLFRVCFLAALIMAFTLPNSVYAQKPIFKEVSVHDPSIIETNGTFYVFGSHLASAKSNDLMQWQQLTTSVSNDNPLIPNVYEELKETFEWAQSDTLWAADVTQLADGKYYMYYNACRGDSPRSAMGVAVADNIEGPYKNKGIFLKSGMEGTSSDGTPYDATKHPNVVDPHTFFDKDGKLWMVYGSYSGGIFILEMNPKTGFPLPGQGYGKKLLGGNHSRIEGPYVLYNPDTQYYYLYLSYGGLDATGGYNIRVARSKKPDGPYYDAEGNPMLDVRGKGGTFFDDRSIEPYGVKLMGSYTFETENEKGTGYVSPGHNSAYYDEKTGRSYLIFHTRFPGRGEEHEVRVHQLFMNKDGWPVAAPYRYAGETLKEVKQKDITGTYKLIQHGKDISADIKQTINIQLNKNHTISGEMTGTWRKTGKNTADITLAGKKYNGVFLRQWDSVREKNVMTFSVLNTSGEAVWGSK.

The signal sequence occupies residues Met-1–Ala-26. The active-site Proton acceptor is Asp-38. Residues Asp-38, Asp-122, Asn-168–Asp-171, Ser-188–Ser-190, and His-220–Glu-224 each bind substrate. Glu-224 functions as the Proton donor in the catalytic mechanism. Residue His-318 coordinates Ca(2+).

Belongs to the glycosyl hydrolase 43 family. In terms of assembly, homodimer. Requires Ca(2+) as cofactor.

The protein resides in the secreted. It carries out the reaction Endohydrolysis of (1-&gt;5)-alpha-arabinofuranosidic linkages in (1-&gt;5)-arabinans.. It participates in glycan metabolism; L-arabinan degradation. Functionally, involved in the degradation of arabinan and is a key enzyme in the complete degradation of the plant cell wall. Catalyzes the internal cleavage of alpha-(1-&gt;5)-L-arabinofuranosyl residues of the alpha-1,5-L-arabinan to produce arabino-oligosaccharides and L-arabinose. It is also active toward linear branched sugar beet arabinan, and pectin from apple. This Bacillus subtilis (strain 168) protein is Extracellular endo-alpha-(1-&gt;5)-L-arabinanase 2 (abn2).